The chain runs to 187 residues: Ribosome maturation factor RimM (187 aa).

The PRC barrel domain maps to 94-168 (DDEFYHADLV…RVIVDMPDGL (75 aa)). Residues 167 to 187 (GLIGGDKPDTSDTAPLGQDFD) are disordered.

It belongs to the RimM family. As to quaternary structure, binds ribosomal protein uS19.

The protein localises to the cytoplasm. In terms of biological role, an accessory protein needed during the final step in the assembly of 30S ribosomal subunit, possibly for assembly of the head region. Essential for efficient processing of 16S rRNA. May be needed both before and after RbfA during the maturation of 16S rRNA. It has affinity for free ribosomal 30S subunits but not for 70S ribosomes. The sequence is that of Ribosome maturation factor RimM from Jannaschia sp. (strain CCS1).